The primary structure comprises 563 residues: Phospholipase B-like protein F (563 aa).

The N-terminal stretch at 1 to 21 is a signal peptide; sequence MKIINSFVFIFVLLFVFNTNA. Residues Asn-85, Asn-107, Asn-118, Asn-121, Asn-208, Asn-312, and Asn-537 are each glycosylated (N-linked (GlcNAc...) asparagine).

Belongs to the phospholipase B-like family.

It localises to the secreted. In terms of biological role, probable phospholipase. This chain is Phospholipase B-like protein F (plbF), found in Dictyostelium discoideum (Social amoeba).